A 527-amino-acid polypeptide reads, in one-letter code: UDP-glucuronosyltransferase 2A3 (527 aa).

The N-terminal stretch at 1–23 (MRSEKSALVFLLLQLFCVGCGFC) is a signal peptide. Over 24–486 (GKVLVWPCDM…AAHNLTWFQH (463 aa)) the chain is Extracellular. An N-linked (GlcNAc...) asparagine glycan is attached at asparagine 313. The chain crosses the membrane as a helical span at residues 487-507 (YSIDVIGFLLACVATAIFLFT). The Cytoplasmic portion of the chain corresponds to 508-523 (KCCLFSCQKFNKTRKI).

It belongs to the UDP-glycosyltransferase family.

It localises to the membrane. The catalysed reaction is glucuronate acceptor + UDP-alpha-D-glucuronate = acceptor beta-D-glucuronoside + UDP + H(+). UDP-glucuronosyltransferases catalyze phase II biotransformation reactions in which lipophilic substrates are conjugated with glucuronic acid to increase water solubility and enhance excretion. They are of major importance in the conjugation and subsequent elimination of potentially toxic xenobiotics and endogenous compounds. In Pongo abelii (Sumatran orangutan), this protein is UDP-glucuronosyltransferase 2A3 (UGT2A3).